We begin with the raw amino-acid sequence, 326 residues long: Serpentine receptor class gamma-14 (326 aa).

Helical transmembrane passes span 36-56 (QIIY…TILW), 67-83 (FFTL…SILI), 115-135 (IIML…VLLV), 156-176 (LKYV…NIAI), 204-224 (FQLV…AITL), 243-263 (VIIS…SFFF), and 274-294 (GFSF…MICV).

This sequence belongs to the nematode receptor-like protein srg family.

It is found in the membrane. In Caenorhabditis elegans, this protein is Serpentine receptor class gamma-14 (srg-14).